The chain runs to 139 residues: Endoribonuclease YbeY (139 aa).

3 residues coordinate Zn(2+): His-105, His-109, and Asp-115.

It belongs to the endoribonuclease YbeY family. Zn(2+) is required as a cofactor.

The protein localises to the cytoplasm. Its function is as follows. Single strand-specific metallo-endoribonuclease involved in late-stage 70S ribosome quality control and in maturation of the 3' terminus of the 16S rRNA. The sequence is that of Endoribonuclease YbeY from Flavobacterium johnsoniae (strain ATCC 17061 / DSM 2064 / JCM 8514 / BCRC 14874 / CCUG 350202 / NBRC 14942 / NCIMB 11054 / UW101) (Cytophaga johnsonae).